We begin with the raw amino-acid sequence, 104 residues long: U-scoloptoxin(10)-Cw1a (104 aa).

An N-terminal signal peptide occupies residues 1–23 (MNKTVAVFFAVICVICVIKSCKT).

It belongs to the scoloptoxin-10 family. In terms of processing, contains 3 disulfide bonds. In terms of tissue distribution, expressed by the venom gland.

The protein resides in the secreted. This Cormocephalus westwoodi (Westwood's green centipede) protein is U-scoloptoxin(10)-Cw1a.